Reading from the N-terminus, the 113-residue chain is B-type lectin plumieribetin (113 aa).

The 109-residue stretch at 1-109 (NYLSKNDELR…STEIWNSDKN (109 aa)) folds into the Bulb-type lectin domain.

In terms of assembly, homotetramer. Interacts with alpha-1-beta-1 integrin (ITGA1/ITGB1). Not glycosylated. Not N-glycosylated and not O-glycosylated with the mostcommon O-linked glycoconjugates. Post-translationally, the N-terminus is blocked. As to expression, expressed by sting venom glands and is also found in skin mucus. Not found in other tissues tested.

Its subcellular location is the secreted. In terms of biological role, may contribute to some of the local and systemic effects of envenomation by the scorpionfish. Preferentially recognizes mannose-containing carbohydrate structures, but its interaction with single mannose residues is weak. Potently inhibits alpha-1-beta-1 integrin (ITGA1/ITGB1) binding to basement membrane collagen IV in a divalent cation-independent manner. In addition, moderately inhibits both laminin binding integrins alpha-3-beta-1 (ITGA3/ITGB1) and alpha-7-beta-1 (ITGA7/ITGB1). Weakens the cell-collagen contacts, reduces cell spreading, and alters the actin cytoskeleton, after the compensating alpha-2-beta-1 integrin is blocked. On the cellular level, fails to completely detach hepatocarcinoma HepG2 cells and primary arterial smooth muscle cells from the collagen IV fragment CB3. This chain is B-type lectin plumieribetin, found in Scorpaena plumieri (Spotted scorpionfish).